Reading from the N-terminus, the 322-residue chain is Ig gamma-2A chain C region (322 aa).

Ig-like domains follow at residues Pro6–Val98, Val115–Ser212, and Pro221–Ser317. Disulfide bonds link Cys27–Cys82, Cys136–Cys196, and Cys242–Cys300. N-linked (GlcNAc...) asparagine glycosylation is present at Asn172.

The sequence is that of Ig gamma-2A chain C region (Igg-2a) from Rattus norvegicus (Rat).